Consider the following 156-residue polypeptide: Aspartate 1-decarboxylase (156 aa).

The active-site Schiff-base intermediate with substrate; via pyruvic acid is serine 26. Position 26 is a pyruvic acid (Ser) (serine 26). Substrate is bound at residue threonine 58. Tyrosine 59 serves as the catalytic Proton donor. 74–76 (GGA) provides a ligand contact to substrate.

This sequence belongs to the PanD family. As to quaternary structure, heterooctamer of four alpha and four beta subunits. Requires pyruvate as cofactor. In terms of processing, is synthesized initially as an inactive proenzyme, which is activated by self-cleavage at a specific serine bond to produce a beta-subunit with a hydroxyl group at its C-terminus and an alpha-subunit with a pyruvoyl group at its N-terminus.

The protein resides in the cytoplasm. The catalysed reaction is L-aspartate + H(+) = beta-alanine + CO2. The protein operates within cofactor biosynthesis; (R)-pantothenate biosynthesis; beta-alanine from L-aspartate: step 1/1. Its function is as follows. Catalyzes the pyruvoyl-dependent decarboxylation of aspartate to produce beta-alanine. The sequence is that of Aspartate 1-decarboxylase from Gloeothece citriformis (strain PCC 7424) (Cyanothece sp. (strain PCC 7424)).